Consider the following 125-residue polypeptide: Large ribosomal subunit protein eL22 (125 aa).

The protein belongs to the eukaryotic ribosomal protein eL22 family. In terms of assembly, component of the large ribosomal subunit.

The protein resides in the cytoplasm. In terms of biological role, component of the large ribosomal subunit. The ribosome is a large ribonucleoprotein complex responsible for the synthesis of proteins in the cell. The sequence is that of Large ribosomal subunit protein eL22 (rpl22) from Gadus morhua (Atlantic cod).